The chain runs to 1441 residues: Lysophospholipase NTE1 (1441 aa).

Residues 1-22 (MWLTSYVLPRLKNILLLQFHIT) are Lumenal-facing. A helical membrane pass occupies residues 23–43 (LPLNYLVLLLLSTVIITYLFL). The Cytoplasmic segment spans residues 44–1441 (RTRILSNYSQ…ENMLQRRNSI (1398 aa)). Disordered stretches follow at residues 154–173 (SNPSGDAAANATAFEPPSND), 210–236 (THLNEGTHPSTTNNTPGPGSPNLTGEI), 376–445 (QDDT…NSSS), and 551–585 (NRTGGKMASHSKRLNGSSRSNSRTDRSESFDHFRN). Residues 376 to 388 (QDDTGSSASTIQK) show a composition bias toward polar residues. Over residues 572–585 (SRTDRSESFDHFRN) the composition is skewed to basic and acidic residues. Residues 592–718 (NQFS…LTNS) and 707–836 (IYLK…VAKK) each bind a nucleoside 3',5'-cyclic phosphate. One can recognise a PNPLA domain in the interval 1137-1301 (LVLGGGGARG…VDNLPVTEMT (165 aa)). Residues 1141–1146 (GGGARG) carry the GXGXXG motif. The short motif at 1168 to 1172 (GTSIG) is the GXSXG element. Ser-1170 functions as the Nucleophile in the catalytic mechanism. Asp-1288 serves as the catalytic Proton acceptor. The DGA/G motif lies at 1288-1290 (DGG).

It belongs to the NTE family.

Its subcellular location is the endoplasmic reticulum membrane. The enzyme catalyses a 1-acyl-sn-glycero-3-phosphocholine + H2O = sn-glycerol 3-phosphocholine + a fatty acid + H(+). Its activity is regulated as follows. Inhibited by organophosphorus esters. Its function is as follows. Intracellular phospholipase B that catalyzes the double deacylation of phosphatidylcholine (PC) to glycerophosphocholine (GroPCho). Plays an important role in membrane lipid homeostasis. Responsible for the rapid PC turnover in response to inositol, elevated temperatures, or when choline is present in the growth medium. This chain is Lysophospholipase NTE1 (NTE1), found in Kluyveromyces lactis (strain ATCC 8585 / CBS 2359 / DSM 70799 / NBRC 1267 / NRRL Y-1140 / WM37) (Yeast).